A 325-amino-acid chain; its full sequence is Cytochrome c biogenesis protein CcsA (325 aa).

A run of 8 helical transmembrane segments spans residues 12–32 (HISF…LLFV), 45–65 (GMII…VFSG), 72–92 (LYES…VPYF), 100–120 (LNTI…SGLL), 145–165 (MILG…ILVI), 231–251 (TISL…VWAN), 264–281 (ETWA…LHTR), and 293–313 (IVAS…NLLG).

This sequence belongs to the CcmF/CycK/Ccl1/NrfE/CcsA family. In terms of assembly, may interact with Ccs1.

It is found in the plastid. The protein resides in the chloroplast thylakoid membrane. Its function is as follows. Required during biogenesis of c-type cytochromes (cytochrome c6 and cytochrome f) at the step of heme attachment. The polypeptide is Cytochrome c biogenesis protein CcsA (Glycine max (Soybean)).